A 401-amino-acid chain; its full sequence is Argininosuccinate synthase (401 aa).

9–17 (AYSGGLDTS) lines the ATP pocket. Tyr-86 is a binding site for L-citrulline. Gly-116 provides a ligand contact to ATP. L-aspartate-binding residues include Thr-118, Asn-122, and Asp-123. Asn-122 is a binding site for L-citrulline. Positions 126, 174, 183, 259, and 271 each coordinate L-citrulline.

It belongs to the argininosuccinate synthase family. Type 1 subfamily. Homotetramer.

Its subcellular location is the cytoplasm. The enzyme catalyses L-citrulline + L-aspartate + ATP = 2-(N(omega)-L-arginino)succinate + AMP + diphosphate + H(+). Its pathway is amino-acid biosynthesis; L-arginine biosynthesis; L-arginine from L-ornithine and carbamoyl phosphate: step 2/3. The sequence is that of Argininosuccinate synthase from Bacillus cereus (strain AH820).